Consider the following 297-residue polypeptide: UDP-N-acetylenolpyruvoylglucosamine reductase (297 aa).

The FAD-binding PCMH-type domain maps to 26-191; it reads QTGGPAEYLA…IAATFALKAG (166 aa). Residue Arg170 is part of the active site. Catalysis depends on Ser220, which acts as the Proton donor. Residue Glu290 is part of the active site.

It belongs to the MurB family. FAD serves as cofactor.

The protein localises to the cytoplasm. The enzyme catalyses UDP-N-acetyl-alpha-D-muramate + NADP(+) = UDP-N-acetyl-3-O-(1-carboxyvinyl)-alpha-D-glucosamine + NADPH + H(+). It participates in cell wall biogenesis; peptidoglycan biosynthesis. Its function is as follows. Cell wall formation. The sequence is that of UDP-N-acetylenolpyruvoylglucosamine reductase from Lactobacillus delbrueckii subsp. bulgaricus (strain ATCC 11842 / DSM 20081 / BCRC 10696 / JCM 1002 / NBRC 13953 / NCIMB 11778 / NCTC 12712 / WDCM 00102 / Lb 14).